A 219-amino-acid chain; its full sequence is Urease accessory protein UreG (219 aa).

The tract at residues 1–20 is disordered; that stretch reads MSALHSIPHRSKKLPPLRVG. Residue 23–30 coordinates GTP; it reads GPVGSGKT.

This sequence belongs to the SIMIBI class G3E GTPase family. UreG subfamily. Homodimer. UreD, UreF and UreG form a complex that acts as a GTP-hydrolysis-dependent molecular chaperone, activating the urease apoprotein by helping to assemble the nickel containing metallocenter of UreC. The UreE protein probably delivers the nickel.

The protein resides in the cytoplasm. In terms of biological role, facilitates the functional incorporation of the urease nickel metallocenter. This process requires GTP hydrolysis, probably effectuated by UreG. This is Urease accessory protein UreG from Methylibium petroleiphilum (strain ATCC BAA-1232 / LMG 22953 / PM1).